Reading from the N-terminus, the 1016-residue chain is FHIP family protein Bm1_18400 (1016 aa).

2 disordered regions span residues 586 to 608 (DSLR…RSSF) and 757 to 778 (SDGF…PLGK).

It belongs to the FHIP family.

The sequence is that of FHIP family protein Bm1_18400 from Brugia malayi (Filarial nematode worm).